We begin with the raw amino-acid sequence, 305 residues long: Phosphoribosylaminoimidazole-succinocarboxamide synthase (305 aa).

Belongs to the SAICAR synthetase family.

It carries out the reaction 5-amino-1-(5-phospho-D-ribosyl)imidazole-4-carboxylate + L-aspartate + ATP = (2S)-2-[5-amino-1-(5-phospho-beta-D-ribosyl)imidazole-4-carboxamido]succinate + ADP + phosphate + 2 H(+). Its pathway is purine metabolism; IMP biosynthesis via de novo pathway; 5-amino-1-(5-phospho-D-ribosyl)imidazole-4-carboxamide from 5-amino-1-(5-phospho-D-ribosyl)imidazole-4-carboxylate: step 1/2. This Tropheryma whipplei (strain Twist) (Whipple's bacillus) protein is Phosphoribosylaminoimidazole-succinocarboxamide synthase.